The primary structure comprises 342 residues: S-adenosylmethionine:tRNA ribosyltransferase-isomerase (342 aa).

Belongs to the QueA family. Monomer.

Its subcellular location is the cytoplasm. It catalyses the reaction 7-aminomethyl-7-carbaguanosine(34) in tRNA + S-adenosyl-L-methionine = epoxyqueuosine(34) in tRNA + adenine + L-methionine + 2 H(+). It participates in tRNA modification; tRNA-queuosine biosynthesis. Its function is as follows. Transfers and isomerizes the ribose moiety from AdoMet to the 7-aminomethyl group of 7-deazaguanine (preQ1-tRNA) to give epoxyqueuosine (oQ-tRNA). The chain is S-adenosylmethionine:tRNA ribosyltransferase-isomerase from Bacillus pumilus (strain SAFR-032).